The sequence spans 330 residues: Flotillin-like protein FloA (330 aa).

The next 2 helical transmembrane spans lie at 6-26 (LFLL…FTFV) and 28-48 (VMLW…TLIG).

Belongs to the flotillin-like FloA family. In terms of assembly, homooligomerizes.

The protein resides in the cell membrane. The protein localises to the membrane raft. In terms of biological role, found in functional membrane microdomains (FMM) that may be equivalent to eukaryotic membrane rafts. FMMs are highly dynamic and increase in number as cells age. Flotillins are thought to be important factors in membrane fluidity. This Bacillus licheniformis (strain ATCC 14580 / DSM 13 / JCM 2505 / CCUG 7422 / NBRC 12200 / NCIMB 9375 / NCTC 10341 / NRRL NRS-1264 / Gibson 46) protein is Flotillin-like protein FloA.